The primary structure comprises 382 residues: DNA replication and repair protein RecF (382 aa).

30–37 (GPNGHGKS) is an ATP binding site.

Belongs to the RecF family.

The protein localises to the cytoplasm. Functionally, the RecF protein is involved in DNA metabolism; it is required for DNA replication and normal SOS inducibility. RecF binds preferentially to single-stranded, linear DNA. It also seems to bind ATP. The chain is DNA replication and repair protein RecF from Magnetococcus marinus (strain ATCC BAA-1437 / JCM 17883 / MC-1).